Reading from the N-terminus, the 309-residue chain is Homoserine O-succinyltransferase (309 aa).

Cys142 functions as the Acyl-thioester intermediate in the catalytic mechanism. Lys163 and Ser192 together coordinate substrate. The active-site Proton acceptor is His235. Glu237 is a catalytic residue. Position 249 (Arg249) interacts with substrate.

It belongs to the MetA family.

It is found in the cytoplasm. It carries out the reaction L-homoserine + succinyl-CoA = O-succinyl-L-homoserine + CoA. It functions in the pathway amino-acid biosynthesis; L-methionine biosynthesis via de novo pathway; O-succinyl-L-homoserine from L-homoserine: step 1/1. Its function is as follows. Transfers a succinyl group from succinyl-CoA to L-homoserine, forming succinyl-L-homoserine. This chain is Homoserine O-succinyltransferase, found in Pectobacterium carotovorum subsp. carotovorum (strain PC1).